The following is a 115-amino-acid chain: NADH-ubiquinone oxidoreductase chain 3 (115 aa).

A run of 3 helical transmembrane segments spans residues Phe3–Trp23, Phe55–Leu75, and Leu84–Tyr104.

This sequence belongs to the complex I subunit 3 family. Core subunit of respiratory chain NADH dehydrogenase (Complex I) which is composed of 45 different subunits. Interacts with TMEM186. Interacts with TMEM242.

Its subcellular location is the mitochondrion inner membrane. It carries out the reaction a ubiquinone + NADH + 5 H(+)(in) = a ubiquinol + NAD(+) + 4 H(+)(out). Functionally, core subunit of the mitochondrial membrane respiratory chain NADH dehydrogenase (Complex I) which catalyzes electron transfer from NADH through the respiratory chain, using ubiquinone as an electron acceptor. Essential for the catalytic activity of complex I. This Pongo pygmaeus (Bornean orangutan) protein is NADH-ubiquinone oxidoreductase chain 3.